Here is a 128-residue protein sequence, read N- to C-terminus: Flagellar assembly factor FliW (128 aa).

Belongs to the FliW family. As to quaternary structure, interacts with translational regulator CsrA and flagellin(s).

Its subcellular location is the cytoplasm. Acts as an anti-CsrA protein, binds CsrA and prevents it from repressing translation of its target genes, one of which is flagellin. Binds to flagellin and participates in the assembly of the flagellum. The protein is Flagellar assembly factor FliW of Campylobacter fetus subsp. fetus (strain 82-40).